We begin with the raw amino-acid sequence, 434 residues long: Nicotinate phosphoribosyltransferase (434 aa).

At H242 the chain carries Phosphohistidine; by autocatalysis.

It belongs to the NAPRTase family. Transiently phosphorylated on a His residue during the reaction cycle. Phosphorylation strongly increases the affinity for substrates and increases the rate of nicotinate D-ribonucleotide production. Dephosphorylation regenerates the low-affinity form of the enzyme, leading to product release.

It catalyses the reaction nicotinate + 5-phospho-alpha-D-ribose 1-diphosphate + ATP + H2O = nicotinate beta-D-ribonucleotide + ADP + phosphate + diphosphate. It participates in cofactor biosynthesis; NAD(+) biosynthesis; nicotinate D-ribonucleotide from nicotinate: step 1/1. In terms of biological role, catalyzes the synthesis of beta-nicotinate D-ribonucleotide from nicotinate and 5-phospho-D-ribose 1-phosphate at the expense of ATP. This chain is Nicotinate phosphoribosyltransferase, found in Chelativorans sp. (strain BNC1).